Reading from the N-terminus, the 98-residue chain is Gibberellin-regulated protein 1 (98 aa).

Positions M1 to A23 are cleaved as a signal peptide.

The protein belongs to the GASA family. Six disulfide bonds may be present. In terms of tissue distribution, expressed in flower buds, style, stamen filaments, vasculature of sepals, flower abscission zone and green siliques. Lower levels seen in the root phloem, cotyledons and vasculature of rosette leaves.

Its subcellular location is the secreted. Gibberellin-regulated protein that may function in hormonal controlled steps of development such as seed germination, flowering and seed maturation. The chain is Gibberellin-regulated protein 1 (GASA1) from Arabidopsis thaliana (Mouse-ear cress).